Here is a 457-residue protein sequence, read N- to C-terminus: Chromosomal replication initiator protein DnaA (457 aa).

Positions 1–73 (MANNYQTLYD…SKYLSEEFKK (73 aa)) are domain I, interacts with DnaA modulators. The segment at 73–108 (KENIVNFEFIIDNEKLLINSNFLIKETNIKNRFNFS) is domain II. Positions 109-331 (DELLRYNFNN…GNLKQICFWA (223 aa)) are domain III, AAA+ region. ATP contacts are provided by glycine 156, glycine 158, lysine 159, and threonine 160. The tract at residues 332–457 (DNDTNKDLII…LQINLIINKF (126 aa)) is domain IV, binds dsDNA.

The protein belongs to the DnaA family. In terms of assembly, oligomerizes as a right-handed, spiral filament on DNA at oriC.

The protein localises to the cytoplasm. Its function is as follows. Plays an essential role in the initiation and regulation of chromosomal replication. ATP-DnaA binds to the origin of replication (oriC) to initiate formation of the DNA replication initiation complex once per cell cycle. Binds the DnaA box (a 9 base pair repeat at the origin) and separates the double-stranded (ds)DNA. Forms a right-handed helical filament on oriC DNA; dsDNA binds to the exterior of the filament while single-stranded (ss)DNA is stabiized in the filament's interior. The ATP-DnaA-oriC complex binds and stabilizes one strand of the AT-rich DNA unwinding element (DUE), permitting loading of DNA polymerase. After initiation quickly degrades to an ADP-DnaA complex that is not apt for DNA replication. Binds acidic phospholipids. The polypeptide is Chromosomal replication initiator protein DnaA (Ureaplasma parvum serovar 3 (strain ATCC 700970)).